A 406-amino-acid polypeptide reads, in one-letter code: Tryptophan synthase beta chain (406 aa).

K99 carries the N6-(pyridoxal phosphate)lysine modification.

The protein belongs to the TrpB family. In terms of assembly, tetramer of two alpha and two beta chains. Pyridoxal 5'-phosphate is required as a cofactor.

The catalysed reaction is (1S,2R)-1-C-(indol-3-yl)glycerol 3-phosphate + L-serine = D-glyceraldehyde 3-phosphate + L-tryptophan + H2O. It participates in amino-acid biosynthesis; L-tryptophan biosynthesis; L-tryptophan from chorismate: step 5/5. Functionally, the beta subunit is responsible for the synthesis of L-tryptophan from indole and L-serine. This is Tryptophan synthase beta chain from Rhizobium etli (strain CIAT 652).